The following is a 645-amino-acid chain: Heat shock protein SSA2 (645 aa).

S2 bears the N-acetylserine mark. Residues 581-645 (ANQTATQEEF…NDGPTVEEVD (65 aa)) form a disordered region. Positions 611-621 (AGATPSGAAGA) are enriched in low complexity.

Belongs to the heat shock protein 70 family. Binds human histatin-5, an antifungal peptide from saliva.

The protein localises to the cytoplasm. It localises to the secreted. The protein resides in the cell wall. Functionally, heat shock protein that may play a role in the transport of polypeptides both across the mitochondrial membranes and into the endoplasmic reticulum. In terms of biological role, acts as a highly immunodominant antigen. Plays a role in the sensitivity to, and the import of candidacidal beta-defensin peptides. HSP70/SSA1 and SSA2 bind histatin-5, a peptide from human saliva, and mediates its fungicidal activity. SSA2 facilitates fungicidal activity of Hst 5 in binding and intracellular translocation, whereas HSP70/SSA1 appears to have a lesser functional role in Hst 5 toxicity. The protein is Heat shock protein SSA2 of Candida albicans (strain SC5314 / ATCC MYA-2876) (Yeast).